Consider the following 198-residue polypeptide: Imidazoleglycerol-phosphate dehydratase (198 aa).

The protein belongs to the imidazoleglycerol-phosphate dehydratase family.

It localises to the cytoplasm. It carries out the reaction D-erythro-1-(imidazol-4-yl)glycerol 3-phosphate = 3-(imidazol-4-yl)-2-oxopropyl phosphate + H2O. It participates in amino-acid biosynthesis; L-histidine biosynthesis; L-histidine from 5-phospho-alpha-D-ribose 1-diphosphate: step 6/9. The polypeptide is Imidazoleglycerol-phosphate dehydratase (Streptomyces griseus subsp. griseus (strain JCM 4626 / CBS 651.72 / NBRC 13350 / KCC S-0626 / ISP 5235)).